The following is a 322-amino-acid chain: uncharacterized protein (322 aa).

A compositionally biased stretch (low complexity) spans 1 to 17 (MASMAAAIAASRSAVMS). Residues 1–22 (MASMAAAIAASRSAVMSGNRPL) form a disordered region. Ala2 is subject to N-acetylalanine. Residue Ser37 is modified to Phosphoserine. The tract at residues 81 to 104 (AAAADAGDVRDPARFPGLRGPTGQ) is disordered. Residue Ser130 is modified to Phosphoserine. 2 stretches are compositionally biased toward polar residues: residues 142 to 153 (QEPSAATVTSDA) and 161 to 177 (QGTQ…SSSL). The segment at 142-301 (QEPSAATVTS…DDDALFSEPA (160 aa)) is disordered. The residue at position 176 (Ser176) is a Phosphoserine. Residues 183-203 (ARKEEEAPFWKINAERSREGP) show a composition bias toward basic and acidic residues. Positions 245–255 (QEQQTLPSVSA) are enriched in polar residues.

The protein resides in the cytoplasm. This is an uncharacterized protein from Mus musculus (Mouse).